The following is a 152-amino-acid chain: Nucleoside diphosphate kinase B (152 aa).

The tract at residues 1–66 (MANLERTFIA…DRPFFPGLVK (66 aa)) is interaction with AKAP13. Lys-12, Phe-60, Arg-88, Thr-94, Arg-105, and Asn-115 together coordinate ATP. His-118 functions as the Pros-phosphohistidine intermediate in the catalytic mechanism.

It belongs to the NDK family. As to quaternary structure, hexamer of two different chains: An and B (A6, A5B, A4B2, A3B3, A2B4, AB5, B6). Interacts with CAPN8. Interacts with AKAP13. Interacts with ITGB1BP1 (via C-terminal domain region). Interacts with BCL2L10. The cofactor is Mg(2+). Expressed in the base region of the oxyntic and pyloric mucosae.

The protein localises to the cytoplasm. It is found in the cell projection. The protein resides in the lamellipodium. Its subcellular location is the ruffle. It localises to the nucleus. The catalysed reaction is a 2'-deoxyribonucleoside 5'-diphosphate + ATP = a 2'-deoxyribonucleoside 5'-triphosphate + ADP. It carries out the reaction a ribonucleoside 5'-diphosphate + ATP = a ribonucleoside 5'-triphosphate + ADP. It catalyses the reaction ATP + protein L-histidine = ADP + protein N-phospho-L-histidine.. In terms of biological role, major role in the synthesis of nucleoside triphosphates other than ATP. The ATP gamma phosphate is transferred to the NDP beta phosphate via a ping-pong mechanism, using a phosphorylated active-site intermediate. Negatively regulates Rho activity by interacting with AKAP13/LBC. Acts as a transcriptional activator of the MYC gene; binds DNA non-specifically. Binds to both single-stranded guanine- and cytosine-rich strands within the nuclease hypersensitive element (NHE) III(1) region of the MYC gene promoter. Does not bind to duplex NHE III(1). Has G-quadruplex (G4) DNA-binding activity, which is independent of its nucleotide-binding and kinase activity. Binds both folded and unfolded G4 with similar low nanomolar affinities. Stabilizes folded G4s regardless of whether they are prefolded or not. Exhibits histidine protein kinase activity. In Mus musculus (Mouse), this protein is Nucleoside diphosphate kinase B (Nme2).